We begin with the raw amino-acid sequence, 158 residues long: Cyclic pyranopterin monophosphate synthase (158 aa).

Residues 76–78 (LCH) and 114–115 (ME) each bind substrate. D129 is a catalytic residue.

Belongs to the MoaC family. As to quaternary structure, homohexamer; trimer of dimers.

It catalyses the reaction (8S)-3',8-cyclo-7,8-dihydroguanosine 5'-triphosphate = cyclic pyranopterin phosphate + diphosphate. It functions in the pathway cofactor biosynthesis; molybdopterin biosynthesis. Its function is as follows. Catalyzes the conversion of (8S)-3',8-cyclo-7,8-dihydroguanosine 5'-triphosphate to cyclic pyranopterin monophosphate (cPMP). This Shewanella sediminis (strain HAW-EB3) protein is Cyclic pyranopterin monophosphate synthase.